Reading from the N-terminus, the 225-residue chain is Putative O-phosphotransferase MT2714 (225 aa).

Position 30–37 (30–37 (GGSSAGKT)) interacts with ATP.

To S.violaceus chloramphenicol 3-O phosphotransferase.

This is Putative O-phosphotransferase MT2714 from Mycobacterium tuberculosis (strain CDC 1551 / Oshkosh).